A 420-amino-acid polypeptide reads, in one-letter code: Corticotropin-releasing factor receptor 1 (420 aa).

Positions 1-28 (MVPGPRPALLLLLFLLQAFLLWDSPVAA) are cleaved as a signal peptide. At 29–116 (SIQEQYCESL…CQEILSEEKR (88 aa)) the chain is on the extracellular side. Cystine bridges form between C35–C59, C49–C92, and C73–C107. N43, N50, N83, N95, and N103 each carry an N-linked (GlcNAc...) asparagine glycan. The helical transmembrane segment at 117-147 (SKLHYHIAVIINYLGHCVSLGTLLVAFVLFM) threads the bilayer. The Cytoplasmic segment spans residues 148–154 (RLRSIRC). A helical membrane pass occupies residues 155–179 (LRNIIHWNLITAFILRNATWFVVQL). Residues 180–194 (TMNPEVHESNVVWCR) lie on the Extracellular side of the membrane. A disulfide bridge connects residues C193 and C263. The chain crosses the membrane as a helical span at residues 195 to 223 (LVTAAYNYFHVTNFFWMFGEGCYLHTAIV). At 224–230 (LTYSTDK) the chain is on the cytoplasmic side. The helical transmembrane segment at 231–258 (LRKWMFICIGWCIPFPIIVAWAIGKLYY) threads the bilayer. At 259–274 (DNEKCWFGKRAGVYTD) the chain is on the extracellular side. Residues 275–300 (YIYQGPMILVLLINFIFLFNIVRILM) form a helical membrane-spanning segment. At 301–311 (TKLRASTTSET) the chain is on the cytoplasmic side. The helical transmembrane segment at 312 to 336 (IQYRKAVKATLVLLSLLGITYMLFF) threads the bilayer. Residues 337 to 343 (VNPGEDE) lie on the Extracellular side of the membrane. A helical membrane pass occupies residues 344-373 (ISRIVFIYFNSFLESFQGFFVSVFYCFLNS). Topologically, residues 374-420 (EVRSAVRKRWHRWQDKHSIRARVARAMSIPTSPTRVSFHSIKQSSAV) are cytoplasmic.

Belongs to the G-protein coupled receptor 2 family. As to quaternary structure, interacts (via N-terminal extracellular domain) with CRF and UCN.

The protein resides in the cell membrane. Its function is as follows. G-protein coupled receptor for CRH (corticotropin-releasing factor) and UCN (urocortin). Has high affinity for CRH and UCN. Ligand binding causes a conformation change that triggers signaling via guanine nucleotide-binding proteins (G proteins) and down-stream effectors, such as adenylate cyclase. Promotes the activation of adenylate cyclase, leading to increased intracellular cAMP levels. In Gallus gallus (Chicken), this protein is Corticotropin-releasing factor receptor 1 (CRHR1).